We begin with the raw amino-acid sequence, 424 residues long: Homoserine O-succinyltransferase (424 aa).

Residues 67–381 (NAVLVCHALN…PHGHDAFLLD (315 aa)) enclose the AB hydrolase-1 domain. Ser-173 (nucleophile) is an active-site residue. Arg-243 serves as a coordination point for substrate. Catalysis depends on residues Asp-342 and His-375. Asp-376 contributes to the substrate binding site.

Belongs to the AB hydrolase superfamily. MetX family. As to quaternary structure, homodimer.

The protein localises to the cytoplasm. The enzyme catalyses L-homoserine + succinyl-CoA = O-succinyl-L-homoserine + CoA. It participates in amino-acid biosynthesis; L-methionine biosynthesis via de novo pathway; O-succinyl-L-homoserine from L-homoserine: step 1/1. Functionally, transfers a succinyl group from succinyl-CoA to L-homoserine, forming succinyl-L-homoserine. In vitro, also has serine succinyl transferase activity. The chain is Homoserine O-succinyltransferase from Bordetella petrii (strain ATCC BAA-461 / DSM 12804 / CCUG 43448).